Consider the following 340-residue polypeptide: Ferredoxin--NADP reductase (340 aa).

Positions 20, 39, 47, 52, 92, 126, 293, and 334 each coordinate FAD.

Belongs to the ferredoxin--NADP reductase type 2 family. As to quaternary structure, homodimer. FAD is required as a cofactor.

It catalyses the reaction 2 reduced [2Fe-2S]-[ferredoxin] + NADP(+) + H(+) = 2 oxidized [2Fe-2S]-[ferredoxin] + NADPH. The chain is Ferredoxin--NADP reductase from Gluconobacter oxydans (strain 621H) (Gluconobacter suboxydans).